We begin with the raw amino-acid sequence, 323 residues long: Lipid A biosynthesis myristoyltransferase (323 aa).

The helical transmembrane segment at 23–43 (YWGAWLGVAAMAGIALTPPKF) threads the bilayer. An HXXXXD motif motif is present at residues 139–144 (HGWAVD).

It belongs to the LpxL/LpxM/LpxP family. LpxM subfamily.

The protein resides in the cell inner membrane. It carries out the reaction alpha-Kdo-(2-&gt;4)-alpha-Kdo-(2-&gt;6)-(dodecanoyl)-lipid IVA (E. coli) + tetradecanoyl-[ACP] = alpha-Kdo-(2-&gt;4)-alpha-Kdo-(2-&gt;6)-lipid A (E. coli) + holo-[ACP]. The catalysed reaction is (9Z)-hexadecenoyl-(Kdo)2-lipid IVA (E. coli) + tetradecanoyl-[ACP] = ((9Z)-hexadecenoyl-tetradecanoyl)-(Kdo)2-lipid A + holo-[ACP]. Its pathway is glycolipid biosynthesis; KDO(2)-lipid A biosynthesis; KDO(2)-lipid A from CMP-3-deoxy-D-manno-octulosonate and lipid IV(A): step 4/4. The protein operates within bacterial outer membrane biogenesis; lipopolysaccharide biosynthesis. Its function is as follows. Catalyzes the transfer of myristate from myristoyl-[acyl-carrier-protein] (ACP) to Kdo(2)-(lauroyl)-lipid IV(A) to form Kdo(2)-lipid A. Can probably also catalyze the transfer of myristate to Kdo(2)-(palmitoleoyl)-lipid IV(A) to form the cold-adapted Kdo(2)-lipid A. In vitro, can acylate Kdo(2)-lipid IV(A), but acylation of (KDO)2-(lauroyl)-lipid IV(A) is about 100 times faster. In vitro, can use lauroyl-ACP but displays a slight kinetic preference for myristoyl-ACP. This chain is Lipid A biosynthesis myristoyltransferase, found in Escherichia coli (strain K12).